The following is a 239-amino-acid chain: NAD(P)H-hydrate epimerase (239 aa).

Positions 14–220 (AAALDQELMS…EMAEQYNLDI (207 aa)) constitute a YjeF N-terminal domain. 64–68 (NNGGD) lines the (6S)-NADPHX pocket. K(+)-binding residues include Asn-65 and Asp-126. (6S)-NADPHX-binding positions include 130-136 (GFSFSGE) and Asp-159. Residue Ser-162 coordinates K(+).

Belongs to the NnrE/AIBP family. K(+) serves as cofactor.

It localises to the cytoplasm. Its subcellular location is the mitochondrion. The enzyme catalyses (6R)-NADHX = (6S)-NADHX. The catalysed reaction is (6R)-NADPHX = (6S)-NADPHX. Catalyzes the epimerization of the S- and R-forms of NAD(P)HX, a damaged form of NAD(P)H that is a result of enzymatic or heat-dependent hydration. This is a prerequisite for the S-specific NAD(P)H-hydrate dehydratase to allow the repair of both epimers of NAD(P)HX. This Phaeosphaeria nodorum (strain SN15 / ATCC MYA-4574 / FGSC 10173) (Glume blotch fungus) protein is NAD(P)H-hydrate epimerase.